Reading from the N-terminus, the 485-residue chain is MYRSRLGNDLSDITLDYVSSIDDDAAITFYDIVGSQAHVLMLYQQKIITKSDAKKILSSLESLKDETFDSSSGAEDIHELIEALVIKRAGMSSGGKMHTARSRNDQVVLDIRMKIRDDINIICNCLLDTIEALVSVAKNHQKTIMPLYTHLQQAQAGLFSHYLLAHADVLSRDFQRLYGTFERINQSPLGAGPVGGTSISIDRRSTAKMLGFDDVVENSIDATSTRDFVAEYVSMVSILMTNLSKIAEDFVIWSTSEFSFIELSDEFTSPSSVMPQKKNPDILELTRGKTSEVIGNLTAILTTVKGLASGYGRDLQQIKSSIWSTSKISISALLIFKSMLLTLKVNEKQMKKVTESSNLIALDIAEKLVQEGIPFRVTHKIAGSLTQLAHLSKKPISKLTPSDIKKSVADTKVDPKLVLEIISSITVVSSLKERKSYGSSGYDEQKRMISDRLKKINDFRTDLTHRENKINSSLEDLKKQIDEII.

The protein belongs to the lyase 1 family. Argininosuccinate lyase subfamily.

It is found in the cytoplasm. The enzyme catalyses 2-(N(omega)-L-arginino)succinate = fumarate + L-arginine. It participates in amino-acid biosynthesis; L-arginine biosynthesis; L-arginine from L-ornithine and carbamoyl phosphate: step 3/3. The polypeptide is Argininosuccinate lyase (Nitrosopumilus maritimus (strain SCM1)).